We begin with the raw amino-acid sequence, 190 residues long: Potassium-transporting ATPase KdpC subunit (190 aa).

The helical transmembrane segment at 10-30 (TFIFLLLITGGVYPLLTTALG) threads the bilayer.

It belongs to the KdpC family. As to quaternary structure, the system is composed of three essential subunits: KdpA, KdpB and KdpC.

It localises to the cell inner membrane. Functionally, part of the high-affinity ATP-driven potassium transport (or Kdp) system, which catalyzes the hydrolysis of ATP coupled with the electrogenic transport of potassium into the cytoplasm. This subunit acts as a catalytic chaperone that increases the ATP-binding affinity of the ATP-hydrolyzing subunit KdpB by the formation of a transient KdpB/KdpC/ATP ternary complex. This Escherichia coli O157:H7 protein is Potassium-transporting ATPase KdpC subunit.